A 200-amino-acid polypeptide reads, in one-letter code: UPF0301 protein BR0480/BS1330_I0481 (200 aa).

It belongs to the UPF0301 (AlgH) family.

The chain is UPF0301 protein BR0480/BS1330_I0481 from Brucella suis biovar 1 (strain 1330).